Reading from the N-terminus, the 489-residue chain is Probable apyrase 1 (489 aa).

Over 1–28 (MRRFSAAAGARQQQQQGEAVSDRVLRFR) the chain is Cytoplasmic. Residues 29-49 (GVLVVVLAPVLLISLVLLLMP) form a helical; Signal-anchor for type II membrane protein membrane-spanning segment. Topologically, residues 50–489 (RAPASATVEG…GSAIEVASSS (440 aa)) are extracellular. Position 89–99 (89–99 (VIFDAGSSGSR)) interacts with ATP. Glu211 (proton acceptor) is an active-site residue. Position 235 to 245 (235 to 245 (GVVDLGGGSVQ)) interacts with ATP.

Belongs to the GDA1/CD39 NTPase family. It depends on Ca(2+) as a cofactor.

It localises to the membrane. The catalysed reaction is a ribonucleoside 5'-triphosphate + 2 H2O = a ribonucleoside 5'-phosphate + 2 phosphate + 2 H(+). In terms of biological role, catalyzes the hydrolysis of phosphoanhydride bonds of nucleoside tri- and di-phosphates. The sequence is that of Probable apyrase 1 (APY1) from Oryza sativa subsp. japonica (Rice).